A 203-amino-acid polypeptide reads, in one-letter code: GTP-binding protein ypt1 (203 aa).

Residues Gly-15–Cys-23, Tyr-33–Thr-40, Asp-63–Gln-67, Asn-121–Asp-124, and Ser-151–Lys-153 contribute to the GTP site. An Effector region motif is present at residues Tyr-37 to Phe-45. Residues Asn-180–Cys-203 form a disordered region. Residues Cys-202 and Cys-203 are each lipidated (S-geranylgeranyl cysteine).

It belongs to the small GTPase superfamily. Rab family.

Its subcellular location is the endoplasmic reticulum membrane. The protein resides in the golgi apparatus membrane. The protein localises to the cytoplasm. It localises to the preautophagosomal structure membrane. With respect to regulation, rab activation is generally mediated by a guanine exchange factor (GEF), while inactivation through hydrolysis of bound GTP is catalyzed by a GTPase activating protein (GAP). The small GTPases Rab are key regulators of intracellular membrane trafficking, from the formation of transport vesicles to their fusion with membranes. Rabs cycle between an inactive GDP-bound form and an active GTP-bound form that is able to recruit to membranes different set of downstream effectors directly responsible for vesicle formation, movement, tethering and fusion. Ypt-1 regulates the trafficking of secretory vesicles from the endoplasmic reticulum (ER) to the Golgi. Plays a role in the initial events of the autophagic vacuole development which take place at specialized regions of the endoplasmic reticulum. Also involved in the recycling of membrane proteins. The chain is GTP-binding protein ypt1 (ypt-1) from Neurospora crassa (strain ATCC 24698 / 74-OR23-1A / CBS 708.71 / DSM 1257 / FGSC 987).